We begin with the raw amino-acid sequence, 366 residues long: Carbamoyl phosphate synthase small chain (366 aa).

The tract at residues 1-170 (MLKKRYLVLE…TKSPYVSTGY (170 aa)) is CPSase. L-glutamine-binding residues include Ser-47, Gly-221, and Gly-223. The Glutamine amidotransferase type-1 domain occupies 173 to 360 (SVVLVDFGKK…IDMINEYKTK (188 aa)). The Nucleophile role is filled by Cys-248. L-glutamine contacts are provided by Leu-249, Gln-252, Asn-290, Gly-292, and Tyr-293. Catalysis depends on residues His-333 and Glu-335.

Belongs to the CarA family. Composed of two chains; the small (or glutamine) chain promotes the hydrolysis of glutamine to ammonia, which is used by the large (or ammonia) chain to synthesize carbamoyl phosphate. Tetramer of heterodimers (alpha,beta)4.

The enzyme catalyses hydrogencarbonate + L-glutamine + 2 ATP + H2O = carbamoyl phosphate + L-glutamate + 2 ADP + phosphate + 2 H(+). It carries out the reaction L-glutamine + H2O = L-glutamate + NH4(+). The protein operates within amino-acid biosynthesis; L-arginine biosynthesis; carbamoyl phosphate from bicarbonate: step 1/1. It participates in pyrimidine metabolism; UMP biosynthesis via de novo pathway; (S)-dihydroorotate from bicarbonate: step 1/3. In terms of biological role, small subunit of the glutamine-dependent carbamoyl phosphate synthetase (CPSase). CPSase catalyzes the formation of carbamoyl phosphate from the ammonia moiety of glutamine, carbonate, and phosphate donated by ATP, constituting the first step of 2 biosynthetic pathways, one leading to arginine and/or urea and the other to pyrimidine nucleotides. The small subunit (glutamine amidotransferase) binds and cleaves glutamine to supply the large subunit with the substrate ammonia. This is Carbamoyl phosphate synthase small chain from Staphylococcus saprophyticus subsp. saprophyticus (strain ATCC 15305 / DSM 20229 / NCIMB 8711 / NCTC 7292 / S-41).